The chain runs to 947 residues: Bromodomain testis-specific protein (947 aa).

Positions 27-133 (RLTNQLQYLQ…KLFMQKLSQM (107 aa)) constitute a Bromo 1 domain. Asn-109 contacts JQ1. Ser-187 bears the Phosphoserine mark. The segment at 202 to 228 (QTAAQVTKGVKRKADTTTPATSAVKAS) is disordered. The short motif at 209 to 220 (KGVKRKADTTTP) is the Nuclear localization signal element. Positions 217 to 228 (TTTPATSAVKAS) are enriched in polar residues. The region spanning 267 to 376 (VKVTEQLRHC…DVFETHFSKI (110 aa)) is the Bromo 2 domain. Disordered regions lie at residues 395-420 (ETTG…DERV), 444-511 (PFRK…KPMN), 610-698 (NNQL…IPPE), and 882-924 (NKCS…RRRE). The stretch at 417–470 (DERVKRLAKLQEQLKAVHQQLQVLSQVPFRKLNKKKEKSKKEKKKEKVNNSNEN) forms a coiled coil. Positions 447–462 (KLNKKKEKSKKEKKKE) are enriched in basic residues. The segment covering 470–481 (NPRKMCEQMRLK) has biased composition (basic and acidic residues). Residues 482–494 (EKSKRNQPKKRKQ) show a composition bias toward basic residues. Positions 500–582 (KSEDEDNAKP…ACLRKRPLKP (83 aa)) constitute an NET domain. Residues 591 to 621 (KEELHSQKKQELEKRLLDVNNQLNSRKRQTK) adopt a coiled-coil conformation. Residues 637–662 (LSESSSSSSSSSESESSSSDLSSSDS) show a composition bias toward low complexity. Composition is skewed to basic and acidic residues over residues 674 to 692 (TEVK…KMKN) and 885 to 924 (SGEE…RRRE).

The protein belongs to the BET family. Interacts with mRNA splicing machinery proteins SRSF2, DDX5, HNRNPK and TARDBP. Interacts with the acetylated N-terminus of histone H1, H2, H3 and H4. Interacts with P-TEFb components CDK9 and CCNT1/cyclin-T1. Interacts with SMARCE1. Interacts with the acetylated N-terminus of histone H1.4, H2A, H2B, H3 and H4. In terms of processing, ubiquitinated in a SPOP-dependent manner, leading to proteasomal degradation. In terms of tissue distribution, testis-specific. A 3-fold higher expression is seen in adult testis than in embryo testis. Expression seems to be correlated with histone H4 hyperacetylation during the haploid phase of spermatogenesis (spermiogenesis). No expression, or very low expression is seen in patients' testes with abnormal spermatogenesis. Expressed in cancers such as non-small cell lung cancer and squamous cell carcinomas of the head and neck as well as of esophagus, but not in melanoma or in cancers of the colon, breast, kidney and bladder.

The protein localises to the nucleus. Testis-specific chromatin protein that specifically binds histone H4 acetylated at 'Lys-5' and 'Lys-8' (H4K5ac and H4K8ac, respectively) and plays a key role in spermatogenesis. Required in late pachytene spermatocytes: plays a role in meiotic and post-meiotic cells by binding to acetylated histones at the promoter of specific meiotic and post-meiotic genes, facilitating their activation at the appropriate time. In the post-meiotic phase of spermatogenesis, binds to hyperacetylated histones and participates in their general removal from DNA. Also recognizes and binds a subset of butyrylated histones: able to bind histone H4 butyrylated at 'Lys-8' (H4K8ac), while it is not able to bind H4 butyrylated at 'Lys-5' (H4K5ac). Also acts as a component of the splicing machinery in pachytene spermatocytes and round spermatids and participates in 3'-UTR truncation of specific mRNAs in post-meiotic spermatids. Required for chromocenter organization, a structure comprised of peri-centromeric heterochromatin. The chain is Bromodomain testis-specific protein (BRDT) from Homo sapiens (Human).